The chain runs to 576 residues: Eukaryotic translation initiation factor 3 subunit L (576 aa).

Residues 330–536 form the PCI domain; sequence DAIRVFANIL…IHIADTKVAR (207 aa).

It belongs to the eIF-3 subunit L family. In terms of assembly, component of the eukaryotic translation initiation factor 3 (eIF-3) complex, which is composed of 13 subunits: eif3a, eif3b, eif3c, eif3d, eif3e, eif3f, eif3g, eif3h, eif3i, eif3j, eif3k, eif3l and eif3m.

It is found in the cytoplasm. Component of the eukaryotic translation initiation factor 3 (eIF-3) complex, which is involved in protein synthesis of a specialized repertoire of mRNAs and, together with other initiation factors, stimulates binding of mRNA and methionyl-tRNAi to the 40S ribosome. The eIF-3 complex specifically targets and initiates translation of a subset of mRNAs involved in cell proliferation. The polypeptide is Eukaryotic translation initiation factor 3 subunit L (eif3l) (Danio rerio (Zebrafish)).